The sequence spans 908 residues: WD repeat-containing protein 44 (908 aa).

Residues Met1 to Lys163 are binding activity. Phosphoserine is present on residues Ser17, Ser40, Ser61, Ser71, Ser86, and Ser116. 2 stretches are compositionally biased toward polar residues: residues Gln108–Ala120 and Asn148–Asp157. 5 disordered regions span residues Gln108–Gln158, Ala202–Ile273, Thr309–Thr341, Val391–Gln418, and Asp454–Tyr474. 2 positions are modified to phosphothreonine: Thr151 and Thr211. The interval Pro203–Pro249 is important for interaction with ARHGAP26 AND ARHGAP10. A compositionally biased stretch (pro residues) spans Pro225–Pro248. Ser254 carries the post-translational modification Phosphoserine. The segment covering Ser254–Lys270 has biased composition (basic and acidic residues). Residue Thr263 is modified to Phosphothreonine. The segment at Val326–Glu339 is important for interaction with RAB11A. 2 positions are modified to phosphoserine: Ser334 and Ser336. Phosphothreonine is present on residues Thr341 and Thr396. Residues Ser398, Ser465, Ser466, and Ser467 each carry the phosphoserine modification. A compositionally biased stretch (acidic residues) spans Asp462–Gly471. At Tyr474 the chain carries Phosphotyrosine. Residues Glu504–Asn543 form a WD 1 repeat. The segment at Glu552–Asn587 is disordered. Ser556 and Ser560 each carry phosphoserine. Positions Ser556–Lys568 are enriched in low complexity. WD repeat units lie at residues Gly600–Cys638, Gln640–Trp680, Gly685–Gln724, Lys735–Lys774, and Val779–Thr818.

In terms of assembly, interacts preferentially with the GTP-bound form of RAB11 when membrane-associated. Interacts with GRAF1/ARHGAP26 or GRAF2/ARHGAP10; the interaction connects the endoplasmic reticulum (ER) with the endosomal tubule. Interacts with VAPA (via MSP domain) or VAPB (via MSP domain); the interaction connects the ER with the endosomal tubule. Does not bind to other Rab and Rho small G proteins. Post-translationally, phosphorylated by ATK1; the phosphorylation stabilizes its interaction with RAB11A and RAB11B. In terms of tissue distribution, expressed in heart; brain; spleen; lung; liver; muscle and kidney.

Its subcellular location is the cytoplasm. The protein localises to the cytosol. It is found in the perinuclear region. It localises to the endosome membrane. The protein resides in the golgi apparatus. Its subcellular location is the trans-Golgi network. In terms of biological role, downstream effector for Rab11 which regulates Rab11 intracellular membrane trafficking functions such as endocytic recycling, intracellular ciliogenesis and protein export. ATK1-mediated phosphorylation of WDR44 induces binding to Rab11 which activates endocytic recycling of transferrin receptor back to the plasma membrane. When bound to Rab11, prevents the formation of the ciliogenic Rab11-Rabin8/RAB3IP-RAB11FIP3 complex, therefore inhibiting preciliary trafficking and ciliogenesis. May participate in neo-synthesized protein export by connecting the endoplasmic reticulum (ER) with the endosomal tubule via direct interactions with the integral ER proteins VAPA or VAPB and the endosomal protein GRAFs (GRAF1/ARHGAP26 or GRAF2/ARHGAP10), which facilitates the transfer of proteins such as E-cadherin, MPP14 and CFTR into a Rab8-Rab10-Rab11-dependent export route. The protein is WD repeat-containing protein 44 of Rattus norvegicus (Rat).